The primary structure comprises 263 residues: Lysine 5,6-aminomutase beta subunit (263 aa).

The 140-residue stretch at 120 to 259 folds into the B12-binding domain; it reads EVVMVGASTG…TFILKEMVQR (140 aa). Residues 130–136 and His-133 each bind adenosylcob(III)alamin; that span reads TDAHTVG. Lys-144 is modified (N6-(pyridoxal phosphate)lysine). Adenosylcob(III)alamin is bound by residues 185 to 192, 219 to 223, and 239 to 244; these read LVSQTVTQ, IAGGA, and FGPGKY.

It belongs to the KamE family. As to quaternary structure, heterotetramer of 2 alpha and 2 beta subunits. Adenosylcob(III)alamin serves as cofactor. Requires pyridoxal 5'-phosphate as cofactor.

The enzyme catalyses (3S)-3,6-diaminohexanoate = (3S,5S)-3,5-diaminohexanoate. The catalysed reaction is D-lysine = (2R,5S)-2,5-diaminohexanoate. It participates in amino-acid degradation; L-lysine degradation via acetate pathway. Its function is as follows. Catalyzes the migration of the L-beta-lysine and D-lysine epsilon amino group to the delta carbon to produce 3,5-diaminohexanoate and 2,5-diaminohexanoate, respectively. The protein is Lysine 5,6-aminomutase beta subunit of Fusobacterium nucleatum subsp. nucleatum (strain ATCC 25586 / DSM 15643 / BCRC 10681 / CIP 101130 / JCM 8532 / KCTC 2640 / LMG 13131 / VPI 4355).